The primary structure comprises 104 residues: UPF0045 protein YqgV (104 aa).

The protein belongs to the UPF0045 family.

This is UPF0045 protein YqgV (yqgV) from Bacillus subtilis (strain 168).